Consider the following 122-residue polypeptide: Large ribosomal subunit protein uL14 (122 aa).

Belongs to the universal ribosomal protein uL14 family. Part of the 50S ribosomal subunit. Forms a cluster with proteins L3 and L19. In the 70S ribosome, L14 and L19 interact and together make contacts with the 16S rRNA in bridges B5 and B8.

In terms of biological role, binds to 23S rRNA. Forms part of two intersubunit bridges in the 70S ribosome. The polypeptide is Large ribosomal subunit protein uL14 (Janthinobacterium sp. (strain Marseille) (Minibacterium massiliensis)).